Here is a 497-residue protein sequence, read N- to C-terminus: Bifunctional protein GlmU (497 aa).

Residues 1-241 form a pyrophosphorylase region; it reads MSPETIGPAA…RWQVEGANDR (241 aa). Residues 14 to 17, Lys-28, Gln-81, 86 to 87, 112 to 114, Gly-151, Glu-166, Asn-181, and Asn-239 contribute to the UDP-N-acetyl-alpha-D-glucosamine site; these read LAAG, GT, and YGD. Mg(2+) is bound at residue Asp-114. Mg(2+) is bound at residue Asn-239. The interval 242 to 262 is linker; sequence IQLSALAAEHNRRIIESWMRA. The N-acetyltransferase stretch occupies residues 263–497; sequence GVTVVDPATT…QATIEEGKQA (235 aa). Residues Arg-344 and Lys-362 each contribute to the UDP-N-acetyl-alpha-D-glucosamine site. His-374 serves as the catalytic Proton acceptor. Residues Tyr-377 and Asn-388 each coordinate UDP-N-acetyl-alpha-D-glucosamine. Acetyl-CoA-binding positions include 397-398, Ser-416, and Ala-434; that span reads NY.

The protein in the N-terminal section; belongs to the N-acetylglucosamine-1-phosphate uridyltransferase family. In the C-terminal section; belongs to the transferase hexapeptide repeat family. Homotrimer. Mg(2+) is required as a cofactor.

The protein localises to the cytoplasm. The enzyme catalyses alpha-D-glucosamine 1-phosphate + acetyl-CoA = N-acetyl-alpha-D-glucosamine 1-phosphate + CoA + H(+). The catalysed reaction is N-acetyl-alpha-D-glucosamine 1-phosphate + UTP + H(+) = UDP-N-acetyl-alpha-D-glucosamine + diphosphate. It functions in the pathway nucleotide-sugar biosynthesis; UDP-N-acetyl-alpha-D-glucosamine biosynthesis; N-acetyl-alpha-D-glucosamine 1-phosphate from alpha-D-glucosamine 6-phosphate (route II): step 2/2. It participates in nucleotide-sugar biosynthesis; UDP-N-acetyl-alpha-D-glucosamine biosynthesis; UDP-N-acetyl-alpha-D-glucosamine from N-acetyl-alpha-D-glucosamine 1-phosphate: step 1/1. Its pathway is bacterial outer membrane biogenesis; LPS lipid A biosynthesis. In terms of biological role, catalyzes the last two sequential reactions in the de novo biosynthetic pathway for UDP-N-acetylglucosamine (UDP-GlcNAc). The C-terminal domain catalyzes the transfer of acetyl group from acetyl coenzyme A to glucosamine-1-phosphate (GlcN-1-P) to produce N-acetylglucosamine-1-phosphate (GlcNAc-1-P), which is converted into UDP-GlcNAc by the transfer of uridine 5-monophosphate (from uridine 5-triphosphate), a reaction catalyzed by the N-terminal domain. The sequence is that of Bifunctional protein GlmU from Paenarthrobacter aurescens (strain TC1).